Consider the following 101-residue polypeptide: Apolipoprotein C-II (101 aa).

An N-terminal signal peptide occupies residues 1–22 (MGTRFLLALFLVLLVLGLEVQA). The segment at 66–74 (AVDERIRDM) is lipid binding. Residues 78 to 101 (STAAVTTYAGIFTDQLFSMLKGEQ) are lipoprotein lipase cofactor.

It belongs to the apolipoprotein C2 family. In terms of processing, proapolipoprotein C-II is synthesized as a sialic acid containing glycoprotein which is subsequently desialylated prior to its proteolytic processing. Proapolipoprotein C-II, the major form found in plasma undergoes proteolytic cleavage of its N-terminal hexapeptide to generate apolipoprotein C-II, which occurs as the minor form in plasma.

The protein resides in the secreted. In terms of biological role, component of chylomicrons, very low-density lipoproteins (VLDL), low-density lipoproteins (LDL), and high-density lipoproteins (HDL) in plasma. Plays an important role in lipoprotein metabolism as an activator of lipoprotein lipase. Both proapolipoprotein C-II and apolipoprotein C-II can activate lipoprotein lipase. The sequence is that of Apolipoprotein C-II (APOC2) from Tupaia glis (Common tree shrew).